Consider the following 402-residue polypeptide: MAKRSLAKLNTSDLSGKRVLVRVDFNVPLNDAGAITDDTRIRAALPTINDLIGKGAKVILAAHFGRPKGQVNDKMRLTPVATRLSELLSKPVTKTESCIGPDAEAKVNAMANGDVVLLENVRFFAEEEKNDADFAKQLAGLADVYVNDAFGAAHRAHASTEGVTKFLKPSVAGFLMEKELQYLQGAVDEPKRPLAAIVGGSKVSSKIGVLEALIDKCDKVLIGGGMIFTFYKARGLAVGKSLVEEDKLELAKELEAKAKAKGVELLLPTDVLLADNFAPDANSQVADVTAIPDGWMGLDIGPDAIKVFQAALADCKTVIWNGPMGVFEFDKFAAGTNAIATTLAELSGKGCCTIIGGGDSVAAVEKAGLAEKMSHISTGGGASLELLEGKVLPGVAALDDAA.

Residues 24-26 (DFN), Arg40, 63-66 (HFGR), Arg122, and Arg155 each bind substrate. ATP contacts are provided by residues Lys206, Gly297, Glu328, and 357–360 (GGDS).

The protein belongs to the phosphoglycerate kinase family. As to quaternary structure, monomer.

The protein resides in the cytoplasm. The enzyme catalyses (2R)-3-phosphoglycerate + ATP = (2R)-3-phospho-glyceroyl phosphate + ADP. It participates in carbohydrate degradation; glycolysis; pyruvate from D-glyceraldehyde 3-phosphate: step 2/5. This is Phosphoglycerate kinase from Synechococcus sp. (strain CC9311).